Consider the following 419-residue polypeptide: Pregnancy-specific beta-1-glycoprotein 1 (419 aa).

Positions 1-34 are cleaved as a signal peptide; the sequence is MGTLSAPPCTQRIKWKGLLLTASLLNFWNLPTTA. The Ig-like V-type domain occupies 35–144; sequence QVTIEAEPTK…TGRFTFTLHL (110 aa). 7 N-linked (GlcNAc...) asparagine glycosylation sites follow: Asn-61, Asn-104, Asn-111, Asn-199, Asn-259, Asn-268, and Asn-303. 3 consecutive Ig-like C2-type domains span residues 149 to 234, 240 to 327, and 335 to 410; these read PSIS…VTLN, PKPY…VTLN, and PRIY…KSMT. A disulfide bond links Cys-169 and Cys-217. 2 disulfide bridges follow: Cys-262–Cys-310 and Cys-354–Cys-394.

The protein belongs to the immunoglobulin superfamily. CEA family.

Its subcellular location is the secreted. This chain is Pregnancy-specific beta-1-glycoprotein 1 (PSG1), found in Homo sapiens (Human).